The chain runs to 155 residues: Large ribosomal subunit protein uL22 (155 aa).

Belongs to the universal ribosomal protein uL22 family. As to quaternary structure, part of the 50S ribosomal subunit.

In terms of biological role, this protein binds specifically to 23S rRNA. It makes multiple contacts with different domains of the 23S rRNA in the assembled 50S subunit and ribosome. Functionally, the globular domain of the protein is located near the polypeptide exit tunnel on the outside of the subunit, while an extended beta-hairpin is found that lines the wall of the exit tunnel in the center of the 70S ribosome. This Pyrococcus abyssi (strain GE5 / Orsay) protein is Large ribosomal subunit protein uL22.